Reading from the N-terminus, the 209-residue chain is Orotate phosphoribosyltransferase (209 aa).

Residues Arg-96, Lys-100, His-102, and Glu-122–Ser-130 each bind 5-phospho-alpha-D-ribose 1-diphosphate. Ser-126 is an orotate binding site.

This sequence belongs to the purine/pyrimidine phosphoribosyltransferase family. PyrE subfamily. As to quaternary structure, homodimer. The cofactor is Mg(2+).

The enzyme catalyses orotidine 5'-phosphate + diphosphate = orotate + 5-phospho-alpha-D-ribose 1-diphosphate. The protein operates within pyrimidine metabolism; UMP biosynthesis via de novo pathway; UMP from orotate: step 1/2. Its function is as follows. Catalyzes the transfer of a ribosyl phosphate group from 5-phosphoribose 1-diphosphate to orotate, leading to the formation of orotidine monophosphate (OMP). The protein is Orotate phosphoribosyltransferase of Listeria innocua serovar 6a (strain ATCC BAA-680 / CLIP 11262).